The primary structure comprises 405 residues: FAD-dependent monooxygenase thnD (405 aa).

The FAD site is built by E30, A45, R106, D308, and G321.

The protein belongs to the paxM FAD-dependent monooxygenase family. It depends on FAD as a cofactor.

Its function is as follows. FAD-dependent monooxygenase; part of the gene cluster that produces the tetronate natural products trihazones. Transcription analysis of thnD confirmed this gene is expressed, hence its role in the biosynthetic pathway remains cryptic. The pathway begins with the formation of trihazone A by the hybrid PKS-NRPS synthetase thnA and the trans-enoyl reductase thnE. Trihazone A is further decarboxylated by the 2-oxoglutarate-dependent dioxygenase thnC to produce trihazone D. The function of the FAD-dependent monooxygenase thnD has still to be identified. The chain is FAD-dependent monooxygenase thnD from Trichoderma harzianum (Hypocrea lixii).